A 394-amino-acid polypeptide reads, in one-letter code: Dual-specificity RNA methyltransferase RlmN (394 aa).

Glutamate 115 acts as the Proton acceptor in catalysis. The 243-residue stretch at 121–363 folds into the Radical SAM core domain; the sequence is DEGRGTLCVS…SPIRTPRGED (243 aa). Cysteine 128 and cysteine 368 are disulfide-bonded. Residues cysteine 135, cysteine 139, and cysteine 142 each coordinate [4Fe-4S] cluster. S-adenosyl-L-methionine-binding positions include 194-195, serine 226, 248-250, and asparagine 325; these read GE and SFH. Cysteine 368 (S-methylcysteine intermediate) is an active-site residue.

This sequence belongs to the radical SAM superfamily. RlmN family. The cofactor is [4Fe-4S] cluster.

The protein localises to the cytoplasm. It carries out the reaction adenosine(2503) in 23S rRNA + 2 reduced [2Fe-2S]-[ferredoxin] + 2 S-adenosyl-L-methionine = 2-methyladenosine(2503) in 23S rRNA + 5'-deoxyadenosine + L-methionine + 2 oxidized [2Fe-2S]-[ferredoxin] + S-adenosyl-L-homocysteine. The enzyme catalyses adenosine(37) in tRNA + 2 reduced [2Fe-2S]-[ferredoxin] + 2 S-adenosyl-L-methionine = 2-methyladenosine(37) in tRNA + 5'-deoxyadenosine + L-methionine + 2 oxidized [2Fe-2S]-[ferredoxin] + S-adenosyl-L-homocysteine. Functionally, specifically methylates position 2 of adenine 2503 in 23S rRNA and position 2 of adenine 37 in tRNAs. m2A2503 modification seems to play a crucial role in the proofreading step occurring at the peptidyl transferase center and thus would serve to optimize ribosomal fidelity. The protein is Dual-specificity RNA methyltransferase RlmN of Roseobacter denitrificans (strain ATCC 33942 / OCh 114) (Erythrobacter sp. (strain OCh 114)).